A 383-amino-acid chain; its full sequence is Acetylornithine deacetylase (383 aa).

Position 80 (H80) interacts with Zn(2+). D82 is an active-site residue. D112 serves as a coordination point for Zn(2+). Residue E144 is part of the active site. 3 residues coordinate Zn(2+): E145, E169, and H355.

It belongs to the peptidase M20A family. ArgE subfamily. As to quaternary structure, homodimer. The cofactor is Zn(2+). Co(2+) is required as a cofactor. It depends on glutathione as a cofactor.

The protein localises to the cytoplasm. It catalyses the reaction N(2)-acetyl-L-ornithine + H2O = L-ornithine + acetate. It participates in amino-acid biosynthesis; L-arginine biosynthesis; L-ornithine from N(2)-acetyl-L-ornithine (linear): step 1/1. Functionally, catalyzes the hydrolysis of the amide bond of N(2)-acetylated L-amino acids. Cleaves the acetyl group from N-acetyl-L-ornithine to form L-ornithine, an intermediate in L-arginine biosynthesis pathway, and a branchpoint in the synthesis of polyamines. This chain is Acetylornithine deacetylase, found in Salmonella heidelberg (strain SL476).